The chain runs to 156 residues: Protein eva-1 homolog A (156 aa).

A helical membrane pass occupies residues Ala-40–Met-60. The tract at residues Asp-79–Ser-100 is disordered. The segment covering Asp-84–Ala-96 has biased composition (acidic residues). Residue Thr-110 is modified to Phosphothreonine. Position 118 is a phosphoserine (Ser-118).

The protein belongs to the EVA1 family.

Its subcellular location is the endoplasmic reticulum membrane. The protein localises to the lysosome membrane. Functionally, acts as a regulator of programmed cell death, mediating both autophagy and apoptosis. This chain is Protein eva-1 homolog A (Eva1a), found in Mus musculus (Mouse).